Here is a 478-residue protein sequence, read N- to C-terminus: Solute carrier family 2, facilitated glucose transporter member 8 (478 aa).

Residues 1–20 (MTPEDQEETQPLLRPPGGSA) are disordered. Residues 1 to 25 (MTPEDQEETQPLLRPPGGSAPRGRR) are Cytoplasmic-facing. The segment covering 11–20 (PLLRPPGGSA) has biased composition (low complexity). The short motif at 12–13 (LL) is the Dileucine internalization motif element. A helical membrane pass occupies residues 26 to 46 (VFLAAFAAALGPLSFGFALGY). Residues 47–70 (SSPAIPSLRRAAPPAPHLDEDAAS) lie on the Extracellular side of the membrane. The chain crosses the membrane as a helical span at residues 71–91 (WFGAIVTLGAAAGGVLGGWLL). The Cytoplasmic segment spans residues 92–97 (DRAGRK). A helical transmembrane segment spans residues 98 to 118 (LSLVLCALPFVAGFAVITAAQ). The Extracellular portion of the chain corresponds to 119–127 (NLWMLLGGR). The chain crosses the membrane as a helical span at residues 128–148 (LLTGLACGIASLVAPVYISEI). The Cytoplasmic segment spans residues 149-158 (AYPEVRGLLG). Residues 159–179 (SCVQLMVVTGILLAYLAGWVL) traverse the membrane as a helical segment. Q162 is a binding site for D-glucose. The Extracellular segment spans residues 180-182 (EWR). Residues 183–203 (WLAVLGCVPPSFMLLLMCFMP) form a helical membrane-spanning segment. Residues 204–257 (ETPRFLLSQHKHQEAMAAMQFLWGYAQGWEEPPLGAQHQDFHVAQLRRPGVYKP) lie on the Cytoplasmic side of the membrane. Residues 258 to 278 (FIIGISLMAFQQLSGVNAVMF) form a helical membrane-spanning segment. D-glucose contacts are provided by residues 268–269 (QQ) and N274. Residues 279-293 (YAETIFEEAKFKDSS) are Extracellular-facing. Residues 294-314 (LASVVVGVIQVLFTATAALIM) form a helical membrane-spanning segment. At 315–320 (DRAGRR) the chain is on the cytoplasmic side. A helical membrane pass occupies residues 321 to 341 (LLLTLSGVVMVFSTSAFGTYF). At 342–368 (KLTEGGPSNSSHVDLPALVSMEAADTN) the chain is on the extracellular side. An N-linked (GlcNAc...) asparagine glycan is attached at N350. The helical transmembrane segment at 369-389 (VGLAWLAVGSMCLFIAGFAVG) threads the bilayer. Over 390–405 (WGPIPWLLMSEIFPLH) the chain is Cytoplasmic. A D-glucose-binding site is contributed by W395. The helical transmembrane segment at 406–426 (VKGVATGVCVLTNWFMAFLVT) threads the bilayer. Over 427–439 (KEFSSLMEVLRPY) the chain is Extracellular. Residues 440-460 (GAFWLASAFCIFGVLFTLACV) traverse the membrane as a helical segment. Over 461–478 (PETKGKTLEQITAHFEGR) the chain is Cytoplasmic.

This sequence belongs to the major facilitator superfamily. Sugar transporter (TC 2.A.1.1) family. Glucose transporter subfamily. Interacts with AP2B1. Abundantly expressed in testis and more moderately in lung, kidney, spleen, intestine, skeletal muscle, liver and mammary gland.

The protein localises to the cell membrane. It localises to the cytoplasmic vesicle membrane. The catalysed reaction is D-glucose(out) = D-glucose(in). It catalyses the reaction D-fructose(out) = D-fructose(in). It carries out the reaction L-dehydroascorbate(out) = L-dehydroascorbate(in). The enzyme catalyses alpha,alpha-trehalose(in) = alpha,alpha-trehalose(out). Its activity is regulated as follows. Inhibited by cytochalasin B. In terms of biological role, insulin-regulated facilitative hexose transporter that mediates the transport of glucose and fructose. Facilitates hepatic influx of dietary trehalose, which in turn inhibits glucose and fructose influx triggering a starvation signal and hepatic autophagy through activation of AMPK and ULK1. Also able to mediate the transport of dehydroascorbate. The chain is Solute carrier family 2, facilitated glucose transporter member 8 from Bos taurus (Bovine).